We begin with the raw amino-acid sequence, 339 residues long: ATP-dependent 6-phosphofructokinase (339 aa).

ATP is bound by residues glycine 11, 72–73 (RY), and 102–105 (GDGS). Aspartate 103 contributes to the Mg(2+) binding site. Residues 125-127 (TID), arginine 162, and 169-171 (MGR) each bind substrate. Aspartate 127 functions as the Proton acceptor in the catalytic mechanism. ADP contacts are provided by residues 185-187 (GAD) and 214-216 (KSH). Residues glutamate 223, arginine 245, and 251–254 (HVIR) each bind substrate.

Belongs to the phosphofructokinase type A (PFKA) family. ATP-dependent PFK group I subfamily. Prokaryotic clade 'B1' sub-subfamily. In terms of assembly, homotetramer. It depends on Mg(2+) as a cofactor.

Its subcellular location is the cytoplasm. The enzyme catalyses beta-D-fructose 6-phosphate + ATP = beta-D-fructose 1,6-bisphosphate + ADP + H(+). It participates in carbohydrate degradation; glycolysis; D-glyceraldehyde 3-phosphate and glycerone phosphate from D-glucose: step 3/4. With respect to regulation, allosterically activated by ADP and other diphosphonucleosides, and allosterically inhibited by phosphoenolpyruvate. Functionally, catalyzes the phosphorylation of D-fructose 6-phosphate to fructose 1,6-bisphosphate by ATP, the first committing step of glycolysis. The polypeptide is ATP-dependent 6-phosphofructokinase (Streptococcus thermophilus (strain ATCC BAA-491 / LMD-9)).